A 241-amino-acid polypeptide reads, in one-letter code: Uridylate kinase (241 aa).

15–18 contacts ATP; sequence KMSG. Gly57 lines the UMP pocket. Residues Gly58 and Arg62 each coordinate ATP. Residues Asp77 and 138–145 each bind UMP; that span reads TGNPFFTT. Positions 165, 171, and 174 each coordinate ATP.

It belongs to the UMP kinase family. As to quaternary structure, homohexamer.

It is found in the cytoplasm. It carries out the reaction UMP + ATP = UDP + ADP. It functions in the pathway pyrimidine metabolism; CTP biosynthesis via de novo pathway; UDP from UMP (UMPK route): step 1/1. With respect to regulation, inhibited by UTP. In terms of biological role, catalyzes the reversible phosphorylation of UMP to UDP. The chain is Uridylate kinase from Dichelobacter nodosus (strain VCS1703A).